A 164-amino-acid chain; its full sequence is Photosystem II extrinsic protein V (164 aa).

A signal peptide spans 1–27 (MIPNRKIQLSLFAVIIVFETLLNQVYA). The heme c site is built by C64, C67, H68, and M131.

The protein belongs to the cytochrome c family. PsbV subfamily. In terms of assembly, PSII is composed of 1 copy each of membrane proteins PsbA, PsbB, PsbC, PsbD, PsbE, PsbF, PsbH, PsbI, PsbJ, PsbK, PsbL, PsbM, PsbT, PsbY, PsbZ, Psb30/Ycf12, at least 3 peripheral proteins of the oxygen-evolving complex and a large number of cofactors. It forms dimeric complexes. The extrinsic subunits in red algae are PsbO (OEC33), PsbQ', cytochrome c-550 and PsbU. Heme c serves as cofactor.

The protein resides in the plastid. It localises to the chloroplast thylakoid membrane. One of the extrinsic, lumenal subunits of photosystem II (PSII). PSII is a light-driven water plastoquinone oxidoreductase, using light energy to abstract electrons from H(2)O, generating a proton gradient subsequently used for ATP formation. The extrinsic proteins stabilize the structure of photosystem II oxygen-evolving complex (OEC), the ion environment of oxygen evolution and protect the OEC against heat-induced inactivation. This is Photosystem II extrinsic protein V from Gracilaria tenuistipitata var. liui (Red alga).